The sequence spans 2406 residues: Highly reducing polyketide synthase dmxL2 (2406 aa).

The 399-residue stretch at 1–399 (MEAFWSASKK…GTNAHAVLDD (399 aa)) folds into the Ketosynthase family 3 (KS3) domain. The active site involves C130. C130 functions as the For beta-ketoacyl synthase activity in the catalytic mechanism. Residues 414–476 (GHASNGTNGT…GPTDGPTSRP (63 aa)) are disordered. Residues 417 to 448 (SNGTNGTLTNGHILNGEHTSNGMNGTLTNGHA) show a composition bias toward polar residues. A malonyl-CoA:ACP transacylase (MAT) domain region spans residues 574–911 (FVFTGQGAQW…LAGSLFTQGY (338 aa)). Residue S665 is the For malonyltransferase activity of the active site. The interval 962-1096 (PSLLGSPSPS…GLLVIEYEAA (135 aa)) is N-terminal hotdog fold. The region spanning 962–1278 (PSLLGSPSPS…CAEIAGASSN (317 aa)) is the PKS/mFAS DH domain. The segment at 964 to 1273 (LLGSPSPSLA…IEGFLCAEIA (310 aa)) is dehydratase (DH) domain. The active-site Proton acceptor; for dehydratase activity is the H994. Positions 1124–1278 (VHRLDPSGFY…CAEIAGASSN (155 aa)) are C-terminal hotdog fold. The active-site Proton donor; for dehydratase activity is D1189. The segment at 1694-2006 (GMLGSVCLEP…TGKHLGKIAL (313 aa)) is enoylreductase (ER) domain. The segment at 2032–2210 (GVYLLVGGLG…TTVDLGIMRD (179 aa)) is ketoreductase (KR) domain. In terms of domain architecture, Carrier spans 2318–2395 (EASDSVLEAL…TFCNRIAAKS (78 aa)). S2355 carries the O-(pantetheine 4'-phosphoryl)serine modification.

It participates in secondary metabolite biosynthesis. Functionally, highly reducing polyketide synthase; part of the gene cluster that mediates the biosynthesis of the dimeric xanthones cryptosporioptides. The pathway begins with the synthesis of atrochrysone thioester by the polyketide synthase dmx-nrPKS. The atrochrysone carboxyl ACP thioesterase dmxR1 then breaks the thioester bond and releases the atrochrysone carboxylic acid from dmx-nrPKS. Atrochrysone carboxylic acid is decarboxylated by the decarboxylase dmxR15, and oxidized by the anthrone oxygenase dmxR16 to yield emodin. Emodin is then reduced to emodin hydroquinone by the oxidoreductase dmxR7. A-ring reduction by the short chain dehydrogenase dmxR18, dehydration by the scytalone dehydratase-like protein dmxR17 and probable spontaneous re-oxidation, results in overall deoxygenation to chrysophanol. Baeyer-Villiger oxidation by the Baeyer-Villiger monooxygenase (BVMO) dmxR6 then yields monodictylactone in equilibrium with monodictyphenone. In the case of the cryptosporioptides biosynthesis, monodictylactone is reduced at C-12 to an alcohol (by the short chain dehydrogenases dmxR12 or dmxR8) and hydroxylated at C-5 by dmxR9, yielding the electron-rich aromatic which could eliminate H(2)O to form the ortho-quinonemethide, followed by tautomerisation to paraquinone and complete the formal reduction to produce the 10-methylgroup. Conjugate addition of C-4a-OH to the resulting paraquinone by the monooxygenase dmxR10 then gives cyclohexadienone, which is then reduced at C-5 by the short chain dehydrogenase dmxR3 to give the dihydroxanthone. The 6,7-epoxide in the cryptosporioptides could be introduced by the cytochrome P450 monooxygenase dmxL3. The highly reducing PKS dmxL2 manufactures butyrate, which is further carboxylated by dmxL1 to form ethylmalonate. It is not yet clear whether the carboxylation occurs while the butyrate is attached to the ACP of dmxL2, but this unusual fungal metabolite could then be esterified to O-5 by the O-acetyltransferase dmxR13. Finally, dimerization performed by dmxR5 gives the observed dimers cryptosporioptides A, B and C as the final products of the pathway. The polypeptide is Highly reducing polyketide synthase dmxL2 (Cryptosporiopsis sp. (strain 8999)).